A 297-amino-acid chain; its full sequence is PDZ domain-containing protein GIPC3 (297 aa).

One can recognise a PDZ domain in the interval 97–177; that stretch reads EVEVTKTEDA…SQPFTLRLVQ (81 aa).

It belongs to the GIPC family. As to expression, expressed in adult lung, brain and testis. In the inner ear, it is expressed in the inner and outer hair cells of the organ of Corti. Also expressed in cochlear spiral ganglion neurons.

Required for postnatal maturation of the hair bundle and long-term survival of hair cells and spiral ganglion. This chain is PDZ domain-containing protein GIPC3 (Gipc3), found in Mus musculus (Mouse).